Reading from the N-terminus, the 274-residue chain is Large ribosomal subunit protein uL2 (274 aa).

The tract at residues 214-274 (LGRRPRTRPV…NKYIVERRKK (61 aa)) is disordered.

It belongs to the universal ribosomal protein uL2 family. Part of the 50S ribosomal subunit. Forms a bridge to the 30S subunit in the 70S ribosome.

In terms of biological role, one of the primary rRNA binding proteins. Required for association of the 30S and 50S subunits to form the 70S ribosome, for tRNA binding and peptide bond formation. It has been suggested to have peptidyltransferase activity; this is somewhat controversial. Makes several contacts with the 16S rRNA in the 70S ribosome. The chain is Large ribosomal subunit protein uL2 from Flavobacterium johnsoniae (strain ATCC 17061 / DSM 2064 / JCM 8514 / BCRC 14874 / CCUG 350202 / NBRC 14942 / NCIMB 11054 / UW101) (Cytophaga johnsonae).